Consider the following 269-residue polypeptide: MDRYQELFNRLAAKNEGAFVPFVTIGDPTPEQSMKIIDTLVASGADALELGIPFSDPLADGPTIQAATIRALESGTTPIVCFELLTQIRAKYPDMPIGLLMYANLVFTAGIETFYKKCADAGVDSVLIADVPIKESEEFRVAAEKYGIHPIFIAPPNATDETLKSVSELGGGYTYLLSRAGVTGAETKAGKPIRHLVESLTKHNAPPALLGFGISEPAQVKEAIEAGAAGAISGSAVVKIIENNLSDHTAMLDNLGQFIRDMKAASKLS.

Active-site proton acceptor residues include E49 and D60.

The protein belongs to the TrpA family. In terms of assembly, tetramer of two alpha and two beta chains.

It catalyses the reaction (1S,2R)-1-C-(indol-3-yl)glycerol 3-phosphate + L-serine = D-glyceraldehyde 3-phosphate + L-tryptophan + H2O. It functions in the pathway amino-acid biosynthesis; L-tryptophan biosynthesis; L-tryptophan from chorismate: step 5/5. The alpha subunit is responsible for the aldol cleavage of indoleglycerol phosphate to indole and glyceraldehyde 3-phosphate. The chain is Tryptophan synthase alpha chain from Photobacterium profundum (strain SS9).